A 591-amino-acid polypeptide reads, in one-letter code: Aspartate--tRNA ligase (591 aa).

Residue E172 participates in L-aspartate binding. Positions 196–199 (QLFK) are aspartate. An L-aspartate-binding site is contributed by R218. Residues 218-220 (RDE) and Q227 contribute to the ATP site. Position 449 (H449) interacts with L-aspartate. ATP is bound at residue E483. An L-aspartate-binding site is contributed by R490. Residue 535 to 538 (GLDR) coordinates ATP.

The protein belongs to the class-II aminoacyl-tRNA synthetase family. Type 1 subfamily. In terms of assembly, homodimer.

The protein resides in the cytoplasm. It catalyses the reaction tRNA(Asp) + L-aspartate + ATP = L-aspartyl-tRNA(Asp) + AMP + diphosphate. Catalyzes the attachment of L-aspartate to tRNA(Asp) in a two-step reaction: L-aspartate is first activated by ATP to form Asp-AMP and then transferred to the acceptor end of tRNA(Asp). In Actinobacillus pleuropneumoniae serotype 5b (strain L20), this protein is Aspartate--tRNA ligase.